Consider the following 1302-residue polypeptide: Vascular endothelial growth factor receptor kdr-like (1302 aa).

Positions 1-28 (MTPLKTSVKAFFTLHVLFSCISHGLVEG) are cleaved as a signal peptide. The Extracellular segment spans residues 29 to 740 (SRLPDPQLLP…GEDGKPNIEV (712 aa)). Ig-like C2-type domains follow at residues 34-115 (PQLL…HEVS), 143-206 (DPYF…VDNA), 222-318 (KNLA…TKVI), 326-412 (NVTH…ISYK), 419-542 (PKIF…FYVD), 545-636 (PQPF…SALT), and 643-728 (PWLM…AVIT). 2 disulfide bridges follow: Cys-55–Cys-104 and Cys-150–Cys-199. Asn-69 and Asn-97 each carry an N-linked (GlcNAc...) asparagine glycan. 17 N-linked (GlcNAc...) asparagine glycosylation sites follow: Asn-242, Asn-265, Asn-291, Asn-326, Asn-370, Asn-380, Asn-408, Asn-453, Asn-466, Asn-505, Asn-517, Asn-532, Asn-607, Asn-611, Asn-630, Asn-648, and Asn-655. A disulfide bridge connects residues Cys-243 and Cys-302. A disulfide bridge links Cys-444 with Cys-524. A disulfide bridge links Cys-565 with Cys-618. Cys-664 and Cys-712 are joined by a disulfide. Residues 741-761 (IILVSTGAAATFLWIMLILFI) traverse the membrane as a helical segment. The Cytoplasmic portion of the chain corresponds to 762–1302 (RKLRKPSSAD…YVVRYSTPPV (541 aa)). The region spanning 809 to 1139 (LRLGKTLGHG…ELVERLGDLL (331 aa)) is the Protein kinase domain. ATP-binding positions include 815–823 (LGHGAFGKV) and Lys-843. Residue Asp-1003 is the Proton acceptor of the active site. Phosphotyrosine; by autocatalysis is present on residues Tyr-1029, Tyr-1034, and Tyr-1150. Disordered regions lie at residues 1159–1179 (TKAD…PVSL) and 1266–1292 (PLVP…PDYN). The segment covering 1162–1176 (DPSNQSPTEETSTRP) has biased composition (polar residues).

Belongs to the protein kinase superfamily. Tyr protein kinase family. CSF-1/PDGF receptor subfamily. In terms of assembly, interacts with isoform VEGF165 of vegfaa and isoform VEGF171 of vegfab. Post-translationally, phosphorylated and activated by vegfaa and vegfab. In terms of tissue distribution, first expressed in embryos between 5- and 7-somites. At 7 somites, expressed in discrete bilateral stripes both anteriorly and posteriorly, and in a transverse ectodermal stripe in the hindbrain. From 7-somites, expression seems to extend caudally from the head, and in both directions in the trunk region, until by 20-somites, expression is detected as a continuous band from the anterior head region to the tailbud. Concurrently, cells expressing kdrl in the mid- and posterior trunk regions converge medially. By 24 hours post-fertilization (hpf), expressed in all the endothelial cells lining the vasculature.

It is found in the cell membrane. The catalysed reaction is L-tyrosyl-[protein] + ATP = O-phospho-L-tyrosyl-[protein] + ADP + H(+). Functionally, receptor for VEGF or VEGFC. Has a tyrosine-protein kinase activity. Combinations of multiple VEGF receptors are required for development of different blood vessel types in the embryo. Involved in angiogenesis, specifically in VEGF-induced sprouting of new blood vessels. Particularly involved in artery formation. Does not appear to be required for hematopoiesis. This Danio rerio (Zebrafish) protein is Vascular endothelial growth factor receptor kdr-like (kdrl).